The sequence spans 194 residues: Imidazole glycerol phosphate synthase subunit HisH (194 aa).

The region spanning 3–194 is the Glutamine amidotransferase type-1 domain; sequence RIAIVDLGIG…LILLRNFRRL (192 aa). C74 functions as the Nucleophile in the catalytic mechanism. Residues H176 and E178 contribute to the active site.

In terms of assembly, heterodimer of HisH and HisF.

The protein resides in the cytoplasm. The enzyme catalyses 5-[(5-phospho-1-deoxy-D-ribulos-1-ylimino)methylamino]-1-(5-phospho-beta-D-ribosyl)imidazole-4-carboxamide + L-glutamine = D-erythro-1-(imidazol-4-yl)glycerol 3-phosphate + 5-amino-1-(5-phospho-beta-D-ribosyl)imidazole-4-carboxamide + L-glutamate + H(+). It catalyses the reaction L-glutamine + H2O = L-glutamate + NH4(+). The protein operates within amino-acid biosynthesis; L-histidine biosynthesis; L-histidine from 5-phospho-alpha-D-ribose 1-diphosphate: step 5/9. Functionally, IGPS catalyzes the conversion of PRFAR and glutamine to IGP, AICAR and glutamate. The HisH subunit catalyzes the hydrolysis of glutamine to glutamate and ammonia as part of the synthesis of IGP and AICAR. The resulting ammonia molecule is channeled to the active site of HisF. The protein is Imidazole glycerol phosphate synthase subunit HisH of Pyrococcus furiosus (strain ATCC 43587 / DSM 3638 / JCM 8422 / Vc1).